The chain runs to 450 residues: Glucose-6-phosphate isomerase (450 aa).

At Thr39 the chain carries Phosphothreonine. The Proton donor role is filled by Glu291. Catalysis depends on residues His312 and Lys426.

It belongs to the GPI family.

It is found in the cytoplasm. The catalysed reaction is alpha-D-glucose 6-phosphate = beta-D-fructose 6-phosphate. It functions in the pathway carbohydrate biosynthesis; gluconeogenesis. The protein operates within carbohydrate degradation; glycolysis; D-glyceraldehyde 3-phosphate and glycerone phosphate from D-glucose: step 2/4. Catalyzes the reversible isomerization of glucose-6-phosphate to fructose-6-phosphate. The polypeptide is Glucose-6-phosphate isomerase (Bacillus cereus (strain ATCC 10987 / NRS 248)).